We begin with the raw amino-acid sequence, 88 residues long: Small ribosomal subunit protein bS18B (88 aa).

This sequence belongs to the bacterial ribosomal protein bS18 family. Part of the 30S ribosomal subunit. Forms a tight heterodimer with protein bS6.

Its function is as follows. Binds as a heterodimer with protein bS6 to the central domain of the 16S rRNA, where it helps stabilize the platform of the 30S subunit. The sequence is that of Small ribosomal subunit protein bS18B from Mycolicibacterium paratuberculosis (strain ATCC BAA-968 / K-10) (Mycobacterium paratuberculosis).